Consider the following 499-residue polypeptide: Sialic acid-binding Ig-like lectin 8 (499 aa).

The N-terminal stretch at 1–16 is a signal peptide; sequence MLLLLLLLPLLWGTKG. Over 17-363 the chain is Extracellular; that stretch reads MEGDRQYGDG…RPVSQVTLAA (347 aa). Residues Tyr23, 72-75, Arg125, and 134-138 contribute to the a carbohydrate site; these read RPYQ and SYKSQ. An Ig-like V-type domain is found at 40–123; that stretch reads GLCVHVPCSF…ARKRDKGSYF (84 aa). Disulfide bonds link Cys42-Cys181, Cys47-Cys107, and Cys175-Cys224. 2 consecutive Ig-like C2-type domains span residues 157-240 and 246-344; these read PDIL…STVR and PPWN…LSLS. N-linked (GlcNAc...) asparagine glycosylation is present at Asn172. Residues Asn249 and Asn267 are each glycosylated (N-linked (GlcNAc...) asparagine). Residues Cys283 and Cys328 are joined by a disulfide bond. A helical transmembrane segment spans residues 364-384; sequence VGGAGATALAFLSFCIIFIIV. Residues 385 to 499 lie on the Cytoplasmic side of the membrane; the sequence is RSCRKKSARP…HNPSSKEVRG (115 aa). Residues 410-443 are disordered; it reads RGSASQGPLTESWKDGNPLKKPPPAVAPSSGEEG. An ITIM motif motif is present at residues 445–450; that stretch reads LHYATL. Disordered stretches follow at residues 451–470 and 478–499; these read SFHK…DSEY and RETA…EVRG. The SLAM-like motif signature appears at 468-473; sequence SEYSEI.

Belongs to the immunoglobulin superfamily. SIGLEC (sialic acid binding Ig-like lectin) family. In terms of tissue distribution, expressed specifically on blood cells namely basophil, mast cells and eosinophils.

The protein resides in the membrane. Functionally, putative adhesion molecule that mediates sialic-acid dependent binding to blood cells. Preferentially binds to alpha-2,3-linked sialic acid. Also binds to alpha-2,6-linked sialic acid. The sialic acid recognition site may be masked by cis interactions with sialic acids on the same cell surface. Recognizes simultaneously epitopes having a terminal N-acetylneuraminic acid (sialic acid) and an underlying 6-O-sulfated galactose. Preferentially binds to Gal-6-sulfated sialyl-Lewis X glycan epitopes. This Homo sapiens (Human) protein is Sialic acid-binding Ig-like lectin 8 (SIGLEC8).